Reading from the N-terminus, the 1270-residue chain is DNA-directed RNA polymerase subunit beta (1270 aa).

Belongs to the RNA polymerase beta chain family. As to quaternary structure, the RNAP catalytic core consists of 2 alpha, 1 beta, 1 beta' and 1 omega subunit. When a sigma factor is associated with the core the holoenzyme is formed, which can initiate transcription.

It carries out the reaction RNA(n) + a ribonucleoside 5'-triphosphate = RNA(n+1) + diphosphate. In terms of biological role, DNA-dependent RNA polymerase catalyzes the transcription of DNA into RNA using the four ribonucleoside triphosphates as substrates. This Christiangramia forsetii (strain DSM 17595 / CGMCC 1.15422 / KT0803) (Gramella forsetii) protein is DNA-directed RNA polymerase subunit beta.